Reading from the N-terminus, the 282-residue chain is 4-hydroxybenzoate octaprenyltransferase (282 aa).

Transmembrane regions (helical) follow at residues 17–37, 40–60, 90–110, 113–133, 135–155, 163–183, 207–227, 231–251, and 262–282; these read IGIL…NQGF, IDLL…GCVI, AFIL…KLPI, FYFA…KRFL, APQL…FIAS, FIVL…MYAM, LIIA…AINK, WFFY…LKLI, and AFLV…LALI.

The protein belongs to the UbiA prenyltransferase family. The cofactor is Mg(2+).

The protein localises to the cell inner membrane. The catalysed reaction is all-trans-octaprenyl diphosphate + 4-hydroxybenzoate = 4-hydroxy-3-(all-trans-octaprenyl)benzoate + diphosphate. It functions in the pathway cofactor biosynthesis; ubiquinone biosynthesis. Functionally, catalyzes the prenylation of para-hydroxybenzoate (PHB) with an all-trans polyprenyl group. Mediates the second step in the final reaction sequence of ubiquinone-8 (UQ-8) biosynthesis, which is the condensation of the polyisoprenoid side chain with PHB, generating the first membrane-bound Q intermediate 3-octaprenyl-4-hydroxybenzoate. The protein is 4-hydroxybenzoate octaprenyltransferase of Legionella pneumophila (strain Corby).